The sequence spans 55 residues: Large ribosomal subunit protein eL40 (55 aa).

Belongs to the eukaryotic ribosomal protein eL40 family.

This is Large ribosomal subunit protein eL40 from Ignicoccus hospitalis (strain KIN4/I / DSM 18386 / JCM 14125).